A 342-amino-acid chain; its full sequence is 6-hydroxytryprostatin B O-methyltransferase (342 aa).

Aspartate 201 lines the S-adenosyl-L-methionine pocket. The Proton acceptor role is filled by histidine 244.

The protein belongs to the class I-like SAM-binding methyltransferase superfamily. Cation-independent O-methyltransferase family. Homodimer.

It catalyses the reaction 6-hydroxytryprostatin B + S-adenosyl-L-methionine = tryprostatin A + S-adenosyl-L-homocysteine + H(+). It functions in the pathway mycotoxin biosynthesis. In terms of biological role, 6-hydroxytryprostatin B O-methyltransferase; part of the gene cluster that mediates the biosynthesis of fumitremorgins, indole alkaloids that carry not only intriguing chemical structures, but also interesting biological and pharmacological activities. The biosynthesis of fumitremorgin-type alkaloids begins by condensation of the two amino acids L-tryptophan and L-proline to brevianamide F, catalyzed by the non-ribosomal peptide synthetase ftmA. Brevianamide F is then prenylated by the prenyltransferase ftmPT1/ftmB in the presence of dimethylallyl diphosphate, resulting in the formation of tryprostatin B. The three cytochrome P450 monooxygenases, ftmP450-1/ftmC, ftmP450-2/ftmE and ftmP450-3/FtmG, are responsible for the conversion of tryprostatin B to 6-hydroxytryprostatin B, tryprostatin A to fumitremorgin C and fumitremorgin C to 12,13-dihydroxyfumitremorgin C, respectively. The putative methyltransferase ftmMT/ftmD is expected for the conversion of 6-hydroxytryprostatin B to tryprostatin A. FtmPT2/FtmH catalyzes the prenylation of 12,13-dihydroxyfumitre-morgin C in the presence of dimethylallyl diphosphate, resulting in the formation of fumitremorgin B. Fumitremorgin B is further converted to verruculogen by ftmOx1/ftmF via the insertion of an endoperoxide bond between the two prenyl moieties. In some fungal species, verruculogen is further converted to fumitremorgin A, but the enzymes involved in this step have not been identified yet. This Aspergillus fumigatus (strain ATCC MYA-4609 / CBS 101355 / FGSC A1100 / Af293) (Neosartorya fumigata) protein is 6-hydroxytryprostatin B O-methyltransferase.